The sequence spans 484 residues: Glutamyl-tRNA(Gln) amidotransferase subunit A (484 aa).

Catalysis depends on charge relay system residues Lys77 and Ser152. Ser176 (acyl-ester intermediate) is an active-site residue.

This sequence belongs to the amidase family. GatA subfamily. In terms of assembly, heterotrimer of A, B and C subunits.

The catalysed reaction is L-glutamyl-tRNA(Gln) + L-glutamine + ATP + H2O = L-glutaminyl-tRNA(Gln) + L-glutamate + ADP + phosphate + H(+). Its function is as follows. Allows the formation of correctly charged Gln-tRNA(Gln) through the transamidation of misacylated Glu-tRNA(Gln) in organisms which lack glutaminyl-tRNA synthetase. The reaction takes place in the presence of glutamine and ATP through an activated gamma-phospho-Glu-tRNA(Gln). The polypeptide is Glutamyl-tRNA(Gln) amidotransferase subunit A (Lacticaseibacillus casei (strain BL23) (Lactobacillus casei)).